A 52-amino-acid polypeptide reads, in one-letter code: Light-harvesting protein B-880 alpha chain (52 aa).

At 1–12 (MWKVWLLFDPRR) the chain is on the cytoplasmic side. Residues 13 to 33 (TLVALFTFLFVLALLIHFILL) traverse the membrane as a helical segment. Position 29 (His29) interacts with a bacteriochlorophyll. At 34-52 (STDRFNWMQGAPTAPAQTS) the chain is on the periplasmic side.

Belongs to the antenna complex alpha subunit family. The core complex is formed by different alpha and beta chains, binding bacteriochlorophyll molecules, and arranged most probably in tetrameric structures disposed around the reaction center. The non-pigmented gamma chains may constitute additional components.

Its subcellular location is the cell inner membrane. Functionally, antenna complexes are light-harvesting systems, which transfer the excitation energy to the reaction centers. In Afifella marina (Rhodobium marinum), this protein is Light-harvesting protein B-880 alpha chain.